Consider the following 805-residue polypeptide: Sucrose synthase 1 (805 aa).

A GT-B glycosyltransferase region spans residues 274 to 751 (MVFNVVILSP…GLQRIYEKYT (478 aa)).

Belongs to the glycosyltransferase 1 family. Plant sucrose synthase subfamily.

It carries out the reaction an NDP-alpha-D-glucose + D-fructose = a ribonucleoside 5'-diphosphate + sucrose + H(+). Its function is as follows. Sucrose-cleaving enzyme that provides UDP-glucose and fructose for various metabolic pathways. This Tulipa gesneriana (Garden tulip) protein is Sucrose synthase 1.